A 344-amino-acid polypeptide reads, in one-letter code: UDP-N-acetylenolpyruvoylglucosamine reductase (344 aa).

Positions I19–N189 constitute an FAD-binding PCMH-type domain. Residue R165 is part of the active site. Residue S235 is the Proton donor of the active site. The active site involves E331.

This sequence belongs to the MurB family. FAD is required as a cofactor.

It localises to the cytoplasm. The enzyme catalyses UDP-N-acetyl-alpha-D-muramate + NADP(+) = UDP-N-acetyl-3-O-(1-carboxyvinyl)-alpha-D-glucosamine + NADPH + H(+). Its pathway is cell wall biogenesis; peptidoglycan biosynthesis. Functionally, cell wall formation. This is UDP-N-acetylenolpyruvoylglucosamine reductase from Buchnera aphidicola subsp. Schizaphis graminum (strain Sg).